A 217-amino-acid polypeptide reads, in one-letter code: Killer cell lectin-like receptor subfamily B member 1F (217 aa).

At 1 to 45 the chain is on the cytoplasmic side; sequence MDTSRVYGNVKTFRSPGHKQASFPSLSTDACRCPHWHHLALKLGC. The LCK-binding motif signature appears at 31-34; it reads CRCP. The chain crosses the membrane as a helical; Signal-anchor for type II membrane protein span at residues 46–66; it reads ATLILLLLTLIGLSVFVRFLV. Residues 67 to 217 are Extracellular-facing; that stretch reads QKPLIEKCSM…WICQKTLKHV (151 aa). Residues 101–211 form the C-type lectin domain; it reads HRNKCLIISQ…CSSDNHWICQ (111 aa). 2 cysteine pairs are disulfide-bonded: Cys122-Cys210 and Cys189-Cys202.

Expressed in natural killer cells and a subset of T-cells.

The protein resides in the membrane. Binds CLEC2I/Clr-g leading to activation of natural killer cells or stimulation of IL-2 production and proliferation of T-cells in response to antigen stimulation. May contribute to the formation of the immunological synapse between T-cells and antigen-presenting dendritic cells. This is Killer cell lectin-like receptor subfamily B member 1F from Rattus norvegicus (Rat).